The sequence spans 106 residues: Phosphoribosyl-ATP pyrophosphatase (106 aa).

It belongs to the PRA-PH family.

The protein localises to the cytoplasm. The enzyme catalyses 1-(5-phospho-beta-D-ribosyl)-ATP + H2O = 1-(5-phospho-beta-D-ribosyl)-5'-AMP + diphosphate + H(+). It participates in amino-acid biosynthesis; L-histidine biosynthesis; L-histidine from 5-phospho-alpha-D-ribose 1-diphosphate: step 2/9. The protein is Phosphoribosyl-ATP pyrophosphatase of Methylobacillus flagellatus (strain ATCC 51484 / DSM 6875 / VKM B-1610 / KT).